We begin with the raw amino-acid sequence, 190 residues long: Potassium-transporting ATPase KdpC subunit (190 aa).

Residues 10-30 traverse the membrane as a helical segment; it reads TFIFLLLITGGVYPLLTTVLG.

The protein belongs to the KdpC family. As to quaternary structure, the system is composed of three essential subunits: KdpA, KdpB and KdpC.

The protein localises to the cell inner membrane. Part of the high-affinity ATP-driven potassium transport (or Kdp) system, which catalyzes the hydrolysis of ATP coupled with the electrogenic transport of potassium into the cytoplasm. This subunit acts as a catalytic chaperone that increases the ATP-binding affinity of the ATP-hydrolyzing subunit KdpB by the formation of a transient KdpB/KdpC/ATP ternary complex. The polypeptide is Potassium-transporting ATPase KdpC subunit (Escherichia coli O139:H28 (strain E24377A / ETEC)).